The sequence spans 556 residues: MNIAEQMKDVLKEEIKAAVLKAGLAEESQIPNVVLETPKDKTHGDYSTNMAMQLARVAKKAPRQIAEEIVAHFDKGKASIEKLDIAGPGFINFYMNNQYLTKLIPSVLEAGEAYGETNIGNGERVQVEFVSANPTGDLHLGHARGAAVGDSLCNVLSKAGYDVSREYYINDAGNQINNLALSVEVRYFEALGLEKPMPEDGYRGEDIIAIGKRLAEEYGDRFVNEEESERLAFFREYGLKYELEKLRKDLENFRVPFDVWYSETSLYQNGKIDKALEALREKGHVYEEDGATWFRSTTFGDDKDRVLIKKDGTYTYLLPDIAYHKDKLDRGFDKLINVWGADHHGYIPRMKAAIEALGYEKGTLEVEIIQLVHLYKNGEKMKMSKRTGKAVTMRDLIEEVGLDAVRYFFAMRSADTHMDFDLDLAVSTSNENPVYYAQYAHARICSMLRQGEEQGLKPAADLDFSHIQSEKEYDLLKTIGGFPEAVAEAAEKRIPHRVTNYIYDLASALHSFYNAEKVIDPENEEKSRARLALMKATQITLNNALQLIGVSAPEKM.

The 'HIGH' region signature appears at 132–142; sequence ANPTGDLHLGH.

This sequence belongs to the class-I aminoacyl-tRNA synthetase family. In terms of assembly, monomer.

It is found in the cytoplasm. It carries out the reaction tRNA(Arg) + L-arginine + ATP = L-arginyl-tRNA(Arg) + AMP + diphosphate. The chain is Arginine--tRNA ligase (argS) from Bacillus subtilis (strain 168).